Consider the following 390-residue polypeptide: Spore development regulator vosA (390 aa).

One can recognise a Velvet domain in the interval 3-132 (NNTSSDFDLI…ADQGVKLRIR (130 aa)). Over residues 137 to 149 (TMLKRSTRPDEFH) the composition is skewed to basic and acidic residues. Disordered regions lie at residues 137 to 191 (TMLK…PVKR) and 265 to 390 (QASA…GTPQ). Low complexity predominate over residues 165 to 175 (PPSSSYGGYPP). A Nuclear localization signal motif is present at residues 273-280 (IPDPTGQS). Composition is skewed to polar residues over residues 350 to 364 (QTPQ…SQMV) and 371 to 390 (SSVT…GTPQ).

The protein belongs to the velvet family. VosA subfamily. Forms a heterodimeric complex with velB; the formation of the velB-vosA complex is light-dependent. Interacts with velA, velB and velC.

The protein localises to the nucleus. Its function is as follows. Component of the velB-VosA heterodimeric complex that plays a dual role in activating genes associated with spore maturation and repressing certain development-associated genes. The complex binds DNA through the DNA-binding domain of vosA that recognizes an 11-nucleotide consensus sequence 5'-CTGGCCGCGGC-3' consisting of two motifs in the promoters of key developmental regulatory genes. The polypeptide is Spore development regulator vosA (Penicillium rubens (strain ATCC 28089 / DSM 1075 / NRRL 1951 / Wisconsin 54-1255) (Penicillium chrysogenum)).